The chain runs to 325 residues: MTRYSRITGTGSYLPPNRLTNAQLAAELAVKGVETSDEWIVERTGIKARHFAAPDVTSSDLGLEAAKRAIEAAGLQAADIDLIIVATSTPDMVFPSVACILQHKLGIAGCPAFDLQAVCSGFVYALTVADAMIKSGAASKALVIGAEVFSRILDFSDRTTCVLFGDGAGAVVLEASETPGILASDLHADGKHVGILCVPGHVSGGQVLGSPLLTMDGKAVFKLAVGVLESAARATLAKAGLLETDIDWLIPHQANLRIMHSTAKKLKLPLEKLIVTVDEHGNTSAASIPLALDEAVRSGKVKKGDILMLEGVGGGFTWGAVLLKY.

Catalysis depends on residues Cys119 and His252. Residues 253–257 (QANLR) are ACP-binding. The active site involves Asn282.

Belongs to the thiolase-like superfamily. FabH family. In terms of assembly, homodimer.

It is found in the cytoplasm. The catalysed reaction is malonyl-[ACP] + acetyl-CoA + H(+) = 3-oxobutanoyl-[ACP] + CO2 + CoA. It participates in lipid metabolism; fatty acid biosynthesis. Its function is as follows. Catalyzes the condensation reaction of fatty acid synthesis by the addition to an acyl acceptor of two carbons from malonyl-ACP. Catalyzes the first condensation reaction which initiates fatty acid synthesis and may therefore play a role in governing the total rate of fatty acid production. Possesses both acetoacetyl-ACP synthase and acetyl transacylase activities. Its substrate specificity determines the biosynthesis of branched-chain and/or straight-chain of fatty acids. This Polaromonas naphthalenivorans (strain CJ2) protein is Beta-ketoacyl-[acyl-carrier-protein] synthase III.